The sequence spans 741 residues: Transketolase, chloroplastic (741 aa).

Low complexity predominate over residues M1–H19. The tract at residues M1–L33 is disordered. The transit peptide at M1–A66 directs the protein to the chloroplast. Residues L24–L33 show a composition bias toward polar residues. H103 lines the substrate pocket. Residues H143 and G192–L194 each bind thiamine diphosphate. A Mg(2+)-binding site is contributed by D233. 2 residues coordinate thiamine diphosphate: G234 and N263. Mg(2+) contacts are provided by N263 and I265. H340, R434, and S461 together coordinate substrate. H340 provides a ligand contact to thiamine diphosphate. Thiamine diphosphate-binding residues include E488 and F515. E488 acts as the Proton donor in catalysis. H539, D547, and R598 together coordinate substrate.

This sequence belongs to the transketolase family. In terms of assembly, homodimer. Mg(2+) serves as cofactor. Ca(2+) is required as a cofactor. Requires Mn(2+) as cofactor. It depends on Co(2+) as a cofactor. The cofactor is thiamine diphosphate.

The protein resides in the plastid. The protein localises to the chloroplast thylakoid membrane. It carries out the reaction D-sedoheptulose 7-phosphate + D-glyceraldehyde 3-phosphate = aldehydo-D-ribose 5-phosphate + D-xylulose 5-phosphate. The protein operates within carbohydrate biosynthesis; Calvin cycle. Functionally, catalyzes the reversible transfer of a two-carbon ketol group from fructose-6-phosphate or sedoheptulose-7-phosphate to glyceraldehyde-3-phosphate to yield xylulose-5-phosphate and erythrose-4-phosphate or ribose-5-phosphate, respectively. This is Transketolase, chloroplastic from Spinacia oleracea (Spinach).